We begin with the raw amino-acid sequence, 302 residues long: tRNA dimethylallyltransferase (302 aa).

Residue 2–9 (GPTACGKS) participates in ATP binding. 4–9 (TACGKS) is a binding site for substrate. 2 interaction with substrate tRNA regions span residues 27-30 (DSAL) and 149-153 (QRLIR).

The protein belongs to the IPP transferase family. Monomer. It depends on Mg(2+) as a cofactor.

It catalyses the reaction adenosine(37) in tRNA + dimethylallyl diphosphate = N(6)-dimethylallyladenosine(37) in tRNA + diphosphate. In terms of biological role, catalyzes the transfer of a dimethylallyl group onto the adenine at position 37 in tRNAs that read codons beginning with uridine, leading to the formation of N6-(dimethylallyl)adenosine (i(6)A). The polypeptide is tRNA dimethylallyltransferase (Buchnera aphidicola subsp. Acyrthosiphon pisum (strain 5A)).